The chain runs to 287 residues: Inorganic pyrophosphatase (287 aa).

Arginine 79 provides a ligand contact to diphosphate. Mg(2+) contacts are provided by aspartate 116, aspartate 121, and aspartate 153. Polar residues predominate over residues asparagine 244–leucine 258. The tract at residues asparagine 244 to proline 269 is disordered.

This sequence belongs to the PPase family. The cofactor is Mg(2+).

The protein localises to the cytoplasm. It catalyses the reaction diphosphate + H2O = 2 phosphate + H(+). Its function is as follows. Involved in osmoadaptation. The polypeptide is Inorganic pyrophosphatase (ipp1) (Emericella nidulans (strain FGSC A4 / ATCC 38163 / CBS 112.46 / NRRL 194 / M139) (Aspergillus nidulans)).